A 143-amino-acid polypeptide reads, in one-letter code: Large ribosomal subunit protein uL16 (143 aa).

Belongs to the universal ribosomal protein uL16 family. In terms of assembly, part of the 50S ribosomal subunit.

Functionally, binds 23S rRNA and is also seen to make contacts with the A and possibly P site tRNAs. In Oenococcus oeni (strain ATCC BAA-331 / PSU-1), this protein is Large ribosomal subunit protein uL16.